A 712-amino-acid polypeptide reads, in one-letter code: Glucans biosynthesis glucosyltransferase H (712 aa).

The next 6 helical transmembrane spans lie at 57-77 (LAIMLATAALTCAGGYEMYQV), 89-109 (IVLALFAALFAWVALSFVSAL), 408-428 (GIGSYITAPMWLAFLVAGILI), 462-482 (FAGTMGLLMMPKLLALILVVI), 552-572 (YAAPSWLGAVMAVSALLVSWP), and 573-593 (LLLWMMPVILGLVLAIPVALL).

It belongs to the glycosyltransferase 2 family. OpgH subfamily.

It localises to the cell inner membrane. Its pathway is glycan metabolism; osmoregulated periplasmic glucan (OPG) biosynthesis. In terms of biological role, involved in the biosynthesis of osmoregulated periplasmic glucans (OPGs). This is Glucans biosynthesis glucosyltransferase H from Rhodopseudomonas palustris (strain BisA53).